Here is a 285-residue protein sequence, read N- to C-terminus: Flagellar filament core protein flaB2 (285 aa).

It belongs to the bacterial flagellin family. In terms of assembly, the flagellum consists of an outer layer composed of two sheath proteins, flaA1 (44 kDa) and flaA2 (35 kDa) around a core that contains three proteins flaB1 (37 kDa), flaB2 (34 kDa) and flaB3 (32 kDa).

It is found in the periplasmic flagellum. The protein localises to the periplasm. Functionally, component of the core of the flagella. The sequence is that of Flagellar filament core protein flaB2 (flaB2) from Brachyspira hyodysenteriae (Treponema hyodysenteriae).